A 406-amino-acid polypeptide reads, in one-letter code: Nicotinate phosphoribosyltransferase (406 aa).

Histidine 227 carries the phosphohistidine; by autocatalysis modification.

Belongs to the NAPRTase family. In terms of processing, transiently phosphorylated on a His residue during the reaction cycle. Phosphorylation strongly increases the affinity for substrates and increases the rate of nicotinate D-ribonucleotide production. Dephosphorylation regenerates the low-affinity form of the enzyme, leading to product release.

It catalyses the reaction nicotinate + 5-phospho-alpha-D-ribose 1-diphosphate + ATP + H2O = nicotinate beta-D-ribonucleotide + ADP + phosphate + diphosphate. It participates in cofactor biosynthesis; NAD(+) biosynthesis; nicotinate D-ribonucleotide from nicotinate: step 1/1. In terms of biological role, catalyzes the synthesis of beta-nicotinate D-ribonucleotide from nicotinate and 5-phospho-D-ribose 1-phosphate at the expense of ATP. The protein is Nicotinate phosphoribosyltransferase of Methanosarcina mazei (strain ATCC BAA-159 / DSM 3647 / Goe1 / Go1 / JCM 11833 / OCM 88) (Methanosarcina frisia).